The chain runs to 182 residues: Receptor activity-modifying protein 2 (182 aa).

The signal sequence occupies residues 1–45 (MAPLRVERAPGGSQLAVTSAQRPAALRLPPLLLLLLLLLLGAVST). The Extracellular segment spans residues 46–150 (SPESLNQSHP…VQPTFSDPPE (105 aa)). Asn-51, Asn-92, and Asn-137 each carry an N-linked (GlcNAc...) asparagine glycan. Intrachain disulfides connect Cys-76–Cys-106 and Cys-91–Cys-138. The helical transmembrane segment at 151–172 (DVLLAMIIAPICLIPFLVTLVV) threads the bilayer. Topologically, residues 173–182 (WRSKDGDAQA) are cytoplasmic.

Belongs to the RAMP family. As to quaternary structure, heterodimer of CALCRL and RAMP2; the interaction forms the receptor complex for adrenomedullin/ADM. Heterodimer of CALCR and RAMP2; interaction forms the AMYR2 receptor complex for calcitonin/CALC and amylin/IAPP.

It localises to the cell membrane. Its function is as follows. Accessory protein that interacts with and modulates the function of G-protein coupled receptors including calcitonin gene-related peptide type 1 receptor (CALCRL) and calcitonin receptor (CALCR). Required for the transport of CALCRL to the plasma membrane. Together with CALCRL, form a receptor complex for adrenomedullin/ADM. Together with CALCR, act as a receptor complex for calcitonin/CT/CALC. Together with CALCR, also act as a receptor complex for amylin/IAPP. The chain is Receptor activity-modifying protein 2 from Rattus norvegicus (Rat).